Reading from the N-terminus, the 205-residue chain is Proteasome subunit beta (205 aa).

Residues 1–9 constitute a propeptide, removed in mature form; by autocatalysis; sequence MNQTENMEG. The active-site Nucleophile is Thr10.

It belongs to the peptidase T1B family. The 20S proteasome core is composed of 14 alpha and 14 beta subunits that assemble into four stacked heptameric rings, resulting in a barrel-shaped structure. The two inner rings, each composed of seven catalytic beta subunits, are sandwiched by two outer rings, each composed of seven alpha subunits. The catalytic chamber with the active sites is on the inside of the barrel. Has a gated structure, the ends of the cylinder being occluded by the N-termini of the alpha-subunits. Is capped at one or both ends by the proteasome regulatory ATPase, PAN.

It is found in the cytoplasm. The enzyme catalyses Cleavage of peptide bonds with very broad specificity.. Its activity is regulated as follows. The formation of the proteasomal ATPase PAN-20S proteasome complex, via the docking of the C-termini of PAN into the intersubunit pockets in the alpha-rings, triggers opening of the gate for substrate entry. Interconversion between the open-gate and close-gate conformations leads to a dynamic regulation of the 20S proteasome proteolysis activity. Functionally, component of the proteasome core, a large protease complex with broad specificity involved in protein degradation. The sequence is that of Proteasome subunit beta from Methanosphaera stadtmanae (strain ATCC 43021 / DSM 3091 / JCM 11832 / MCB-3).